A 502-amino-acid chain; its full sequence is MNFLVLFFSYSIFVLPYSILVYGISKDRKCCEYGNSVDSSKILYIAGSVRKRRKTFEKKINVSNFEREGNANGYKHIDNKGIYATKQNLEFDEARNKEANENNKNDATTVNRKIIIESENKNNHNNQEQNIKDCYTNENAQNDEKNKKVKIPKVGNAMPEKKPDWFHVPAPNGEKYKKLKSDLGKLKLHTVCEEAQCPNIGECWNIGTATIMLLGDTCTRGCKFCSIKTSSKPPPPDINEPFNTAKAICEWDINYIVITSVDRDDLPDGGADHFAKTVELIKFSKPSILIECLVSDFQGNIDSIKRLALSGLDVYAHNIETVKRLQKYVRDKRANYEQSLYVLKKAKEINPNLYTKTSIMLGLGETQDEVLQTMKDARSNDIDVITFGQYLRPTKNHLNVVEYISPQMFNYYKDVGLKMGFKYIASGPLVRSSYMAGEYFMKNMVEKGRNQKNQQIKPVELKLVTELDKLTECIQKEIKHREISVFIQVHAFLVNVFVLVRA.

The signal sequence occupies residues 1–16 (MNFLVLFFSYSIFVLP). Residues Cys192, Cys197, Cys203, Cys218, Cys222, Cys225, and Ser433 each coordinate [4Fe-4S] cluster. The 219-residue stretch at 204–422 (WNIGTATIML…KDVGLKMGFK (219 aa)) folds into the Radical SAM core domain.

The protein belongs to the radical SAM superfamily. Lipoyl synthase family. It depends on [4Fe-4S] cluster as a cofactor.

It localises to the plastid. The protein resides in the apicoplast. The enzyme catalyses [[Fe-S] cluster scaffold protein carrying a second [4Fe-4S](2+) cluster] + N(6)-octanoyl-L-lysyl-[protein] + 2 oxidized [2Fe-2S]-[ferredoxin] + 2 S-adenosyl-L-methionine + 4 H(+) = [[Fe-S] cluster scaffold protein] + N(6)-[(R)-dihydrolipoyl]-L-lysyl-[protein] + 4 Fe(3+) + 2 hydrogen sulfide + 2 5'-deoxyadenosine + 2 L-methionine + 2 reduced [2Fe-2S]-[ferredoxin]. It functions in the pathway protein modification; protein lipoylation via endogenous pathway; protein N(6)-(lipoyl)lysine from octanoyl-[acyl-carrier-protein]: step 2/2. Functionally, catalyzes the radical-mediated insertion of two sulfur atoms into the C-6 and C-8 positions of the octanoyl moiety bound to the lipoyl domains of lipoate-dependent enzymes, thereby converting the octanoylated domains into lipoylated derivatives. This Plasmodium yoelii yoelii protein is Lipoyl synthase, apicoplast.